A 371-amino-acid chain; its full sequence is tRNA-specific 2-thiouridylase MnmA (371 aa).

ATP is bound by residues 9-16 and methionine 35; that span reads AMSGGVDS. Cysteine 109 functions as the Nucleophile in the catalytic mechanism. Cysteine 109 and cysteine 207 are joined by a disulfide. Glycine 133 contributes to the ATP binding site. The tract at residues 157 to 159 is interaction with tRNA; it reads KDQ. Residue cysteine 207 is the Cysteine persulfide intermediate of the active site.

Belongs to the MnmA/TRMU family.

Its subcellular location is the cytoplasm. The enzyme catalyses S-sulfanyl-L-cysteinyl-[protein] + uridine(34) in tRNA + AH2 + ATP = 2-thiouridine(34) in tRNA + L-cysteinyl-[protein] + A + AMP + diphosphate + H(+). Its function is as follows. Catalyzes the 2-thiolation of uridine at the wobble position (U34) of tRNA, leading to the formation of s(2)U34. This is tRNA-specific 2-thiouridylase MnmA from Solibacter usitatus (strain Ellin6076).